The chain runs to 421 residues: Functional amyloid transporter FapF (421 aa).

Positions 1–24 (MTQTLSLRAVLCATTLVSPFLAQA) are cleaved as a signal peptide. Residues 23–64 (QAATESEVEALKKELLELRQRYEAQQNALMVLEQRVRQVEAQ) adopt a coiled-coil conformation.

The protein belongs to the amyloid transporter (TC 9.B.153) family.

It localises to the secreted. The protein localises to the cell surface. The protein resides in the cell outer membrane. Transports fibril components across the outer membrane. Upon overexpression of the endogenous six-gene locus (fapA-fapF), cells form large clumps during liquid growth, make large amounts of biofilm and produce amyloid fibrils. This chain is Functional amyloid transporter FapF, found in Pseudomonas aeruginosa (strain ATCC 15692 / DSM 22644 / CIP 104116 / JCM 14847 / LMG 12228 / 1C / PRS 101 / PAO1).